The primary structure comprises 288 residues: Fibroblast growth factor 2 (288 aa).

The disordered stretch occupies residues 1 to 133; the sequence is MVGVGGGDVE…RGSRPGPAGT (133 aa). A propeptide spans 1–142 (or 93, or 124, or 125, or 131, or 161); that stretch reads MVGVGGGDVE…TMAAGSITTL (142 aa). The segment covering 52 to 64 has biased composition (low complexity); sequence SVNPRSRAAGSPR. A compositionally biased stretch (basic and acidic residues) spans 68-84; that stretch reads RRTEERPSGSRLGDRGR. Arg-108, Arg-110, and Arg-112 each carry omega-N-methylarginine; alternate. Symmetric dimethylarginine; alternate occurs at positions 108, 110, and 112. The span at 113–132 shows a compositional bias: low complexity; sequence GTAAPRAAPAARGSRPGPAG. Heparin is bound at residue Asn-169. A Cell attachment site; atypical motif is present at residues 179–181; it reads DGR. At Tyr-215 the chain carries Phosphotyrosine; by TEC. A Cell attachment site; atypical motif is present at residues 221–223; the sequence is DGR. A Glycyl lysine isopeptide (Lys-Gly) (interchain with G-Cter in SUMO1) cross-link involves residue Lys-228. A heparin-binding region spans residues 261 to 277; it reads KRTGQYKLGSKTGPGQK.

It belongs to the heparin-binding growth factors family. As to quaternary structure, monomer. Homodimer. Interacts with FGFR1, FGFR2, FGFR3 and FGFR4. Affinity between fibroblast growth factors (FGFs) and their receptors is increased by heparan sulfate glycosaminoglycans that function as coreceptors. Interacts with CSPG4, FGFBP1 and TEC. Found in a complex with FGFBP1, FGF1 and FGF2. Interacts with FGFBP3. Interacts with integrin ITGAV:ITGB3; the interaction is required for FGF2 signaling. Interacts with SNORC (via the extracellular domain). Interacts with glypican GPC3. In terms of processing, phosphorylation at Tyr-215 regulates FGF2 unconventional secretion. Several N-termini starting at positions 94, 125, 126, 132, 143 and 162 have been identified by direct sequencing. As to expression, expressed in granulosa and cumulus cells. Expressed in hepatocellular carcinoma cells, but not in non-cancerous liver tissue.

The protein localises to the secreted. It is found in the nucleus. Its function is as follows. Acts as a ligand for FGFR1, FGFR2, FGFR3 and FGFR4. Also acts as an integrin ligand which is required for FGF2 signaling. Binds to integrin ITGAV:ITGB3. Plays an important role in the regulation of cell survival, cell division, cell differentiation and cell migration. Functions as a potent mitogen in vitro. Can induce angiogenesis. Mediates phosphorylation of ERK1/2 and thereby promotes retinal lens fiber differentiation. This is Fibroblast growth factor 2 (FGF2) from Homo sapiens (Human).